Here is an 83-residue protein sequence, read N- to C-terminus: U3-theraphotoxin-Cg1a (83 aa).

The signal sequence occupies residues 1–23; that stretch reads MRTFTLIAILTCAVLVIFHAAAA. Residues 24-44 constitute a propeptide that is removed on maturation; that stretch reads EELEAQDVIETEALATLDEER. 3 cysteine pairs are disulfide-bonded: cysteine 48–cysteine 61, cysteine 52–cysteine 75, and cysteine 69–cysteine 80.

It belongs to the neurotoxin 12 (Hwtx-2) family. 03 (juruin) subfamily. Post-translationally, contains 3 disulfide bonds. Two different connectivities are observed in similar proteins (C1-C3, C2-C5, C4-C6 or C1-C4, C2-C5, C3-C6). Expressed by the venom gland.

It is found in the secreted. Functionally, probable ion channel inhibitor. This Chilobrachys guangxiensis (Chinese earth tiger tarantula) protein is U3-theraphotoxin-Cg1a.